The following is a 688-amino-acid chain: MGQEKLYIEKELSWLAFNERVLQEAADKSNPLIERMRFLGIYSNNLDEFYKVRFAELKRRIIISEEQGSNSHSRHLLGKIQSRVLKADQEFDGLYNELLLEMARNQIFLINERQLSVNQQSWLRHYFKHYLRQHITPILINRETDLVQFLKDDYTYLAVEIIRGDTINYALLEIPSDKVPRFVNLPPETPRRRKPMILLDNILRYCLDDIFKGFFDYDALNAYSMKMTRDAEYDLVHEMESSLMELMSSSLKQRLTAEPVRFVYQRDMPAALVDVLREKLTISRYDSIVPGGRYHNFKDFINFPNVGKANLVNKPLPRLRHLWFDKEKFRNGFDAIRERDVLLYYPYHTFEHVLELLRQASFDPSVLAIKINIYRVAKDSRIIDSMIHAAHNGKKVTVVVELQARFDEEANIHWAKRLTEAGVHVIFSAPGLKIHAKLFLISRKEGDDVVRYAHIGTGNFNEKTARLYTDYSLLTADARITNEVRRVFNFIENPYRPVTFDYLMVSPQNSRRLLYEMIDREIANAQQGLPSGITLKLNNLVDKGLVDRLYAASGSGVQVNLLVRGMCSLIPQLEGISDNIRAISIVDRYLEHDRVYIFENGGDKQVWLSSADWMTRNIDYRIEVATPILDPRLKQRVLDIIDILFSDTVKARFIDKELSNRYVPRGNRRKVQAQLAIYDYIKSLEQPD.

Asparagine 45 contributes to the ATP binding site. Mg(2+) contacts are provided by arginine 375 and arginine 405. A PLD phosphodiesterase domain is found at 430–464; the sequence is PGLKIHAKLFLISRKEGDDVVRYAHIGTGNFNEKT. Catalysis depends on histidine 435, which acts as the Phosphohistidine intermediate. The ATP site is built by tyrosine 468, arginine 564, and histidine 592.

The protein belongs to the polyphosphate kinase 1 (PPK1) family. The cofactor is Mg(2+). An intermediate of this reaction is the autophosphorylated ppk in which a phosphate is covalently linked to a histidine residue through a N-P bond.

It catalyses the reaction [phosphate](n) + ATP = [phosphate](n+1) + ADP. Its function is as follows. Catalyzes the reversible transfer of the terminal phosphate of ATP to form a long-chain polyphosphate (polyP). The chain is Polyphosphate kinase from Salmonella typhimurium (strain LT2 / SGSC1412 / ATCC 700720).